The sequence spans 327 residues: 2-methoxy-6-polyprenyl-1,4-benzoquinol methylase, mitochondrial (327 aa).

The N-terminal 49 residues, 1–49 (MAAPRSCVLWSYCGHGWSRLAGDCRLPGFRRSWLGATLSARSLSQEKRA), are a transit peptide targeting the mitochondrion. Residues Thr117, Asp171, and 199–200 (DA) contribute to the S-adenosyl-L-methionine site.

This sequence belongs to the class I-like SAM-binding methyltransferase superfamily. MenG/UbiE family. Component of a multi-subunit COQ enzyme complex, composed of at least COQ3, COQ4, COQ5, COQ6, COQ7 and COQ9. Interacts with PYURF; the interaction is direct, stabilizes COQ5 protein and associates PYURF with COQ enzyme complex.

The protein localises to the mitochondrion inner membrane. The catalysed reaction is 2-methoxy-6-(all-trans-decaprenyl)benzene-1,4-diol + S-adenosyl-L-methionine = 5-methoxy-2-methyl-3-(all-trans-decaprenyl)benzene-1,4-diol + S-adenosyl-L-homocysteine + H(+). Its pathway is cofactor biosynthesis; ubiquinone biosynthesis. Its function is as follows. Methyltransferase required for the conversion of 2-decaprenyl-6-methoxy-1,4-benzoquinol (DDMQH2) to 2-decaprenyl-3-methyl-6-methoxy-1,4-benzoquinol (DMQH2). This Rattus norvegicus (Rat) protein is 2-methoxy-6-polyprenyl-1,4-benzoquinol methylase, mitochondrial.